A 112-amino-acid chain; its full sequence is Small ribosomal subunit protein bS6 (112 aa).

It belongs to the bacterial ribosomal protein bS6 family.

In terms of biological role, binds together with bS18 to 16S ribosomal RNA. This is Small ribosomal subunit protein bS6 from Hyphomonas neptunium (strain ATCC 15444).